Consider the following 485-residue polypeptide: Adenosylhomocysteinase 2 (485 aa).

Positions 64, 139, and 205 each coordinate substrate. 206–208 (TTT) is an NAD(+) binding site. The substrate site is built by Lys-235 and Asp-239. Residues Asn-240, 269-274 (GYGDVG), Glu-292, Asn-327, 348-350 (IGH), and Asn-397 contribute to the NAD(+) site.

This sequence belongs to the adenosylhomocysteinase family. It depends on NAD(+) as a cofactor.

It catalyses the reaction S-adenosyl-L-homocysteine + H2O = L-homocysteine + adenosine. It participates in amino-acid biosynthesis; L-homocysteine biosynthesis; L-homocysteine from S-adenosyl-L-homocysteine: step 1/1. Adenosylhomocysteine is a competitive inhibitor of S-adenosyl-L-methionine-dependent methyl transferase reactions; therefore adenosylhomocysteinase may play a key role in the control of methylations via regulation of the intracellular concentration of adenosylhomocysteine. The protein is Adenosylhomocysteinase 2 (SAHH2) of Arabidopsis thaliana (Mouse-ear cress).